The primary structure comprises 441 residues: Glutamate--tRNA ligase 2 (441 aa).

Positions 9-19 match the 'HIGH' region motif; it reads PSPTGYIHVGN. The 'KMSKS' region motif lies at 239 to 243; the sequence is ALSKR. Residue Lys242 coordinates ATP.

The protein belongs to the class-I aminoacyl-tRNA synthetase family. Glutamate--tRNA ligase type 1 subfamily. In terms of assembly, monomer.

It is found in the cytoplasm. The enzyme catalyses tRNA(Glu) + L-glutamate + ATP = L-glutamyl-tRNA(Glu) + AMP + diphosphate. Functionally, catalyzes the attachment of glutamate to tRNA(Glu) in a two-step reaction: glutamate is first activated by ATP to form Glu-AMP and then transferred to the acceptor end of tRNA(Glu). This Cereibacter sphaeroides (strain ATCC 17023 / DSM 158 / JCM 6121 / CCUG 31486 / LMG 2827 / NBRC 12203 / NCIMB 8253 / ATH 2.4.1.) (Rhodobacter sphaeroides) protein is Glutamate--tRNA ligase 2.